The sequence spans 212 residues: Fibrillarin-like rRNA/tRNA 2'-O-methyltransferase (212 aa).

S-adenosyl-L-methionine-binding positions include 73–74 (TT), 91–92 (EI), 116–117 (DA), and 136–139 (DVAQ).

The protein belongs to the methyltransferase superfamily. Fibrillarin family. Interacts with nop5. Component of box C/D small ribonucleoprotein (sRNP) particles that contain rpl7ae, FlpA and nop5, plus a guide RNA.

Its function is as follows. Involved in pre-rRNA and tRNA processing. Utilizes the methyl donor S-adenosyl-L-methionine to catalyze the site-specific 2'-hydroxyl methylation of ribose moieties in rRNA and tRNA. Site specificity is provided by a guide RNA that base pairs with the substrate. Methylation occurs at a characteristic distance from the sequence involved in base pairing with the guide RNA. In Methanothrix thermoacetophila (strain DSM 6194 / JCM 14653 / NBRC 101360 / PT) (Methanosaeta thermophila), this protein is Fibrillarin-like rRNA/tRNA 2'-O-methyltransferase.